We begin with the raw amino-acid sequence, 198 residues long: Beta-crystallin A1 (198 aa).

The segment at 1–13 (MAQINPLPVPLGP) is N-terminal arm. 2 Beta/gamma crystallin 'Greek key' domains span residues 14–53 (WKIT…KVEC) and 54–100 (GGWI…RPIC). The tract at residues 101–106 (SANHKE) is connecting peptide. 2 consecutive Beta/gamma crystallin 'Greek key' domains span residues 107–148 (SKLV…KVQC) and 149–197 (GSWV…RRIQ).

This sequence belongs to the beta/gamma-crystallin family. Homo/heterodimer, or complexes of higher-order. The structure of beta-crystallin oligomers seems to be stabilized through interactions between the N-terminal arms.

Crystallins are the dominant structural components of the vertebrate eye lens. This chain is Beta-crystallin A1, found in Rana temporaria (European common frog).